A 290-amino-acid chain; its full sequence is Small ribosomal subunit biogenesis GTPase RsgA (290 aa).

A CP-type G domain is found at 61–218 (KSELVRPTVA…IVDTPGFSTL (158 aa)). GTP-binding positions include 110-113 (NKID) and 161-169 (GPSGAGKST). Zn(2+) contacts are provided by Cys243, Cys248, His250, and Cys256.

This sequence belongs to the TRAFAC class YlqF/YawG GTPase family. RsgA subfamily. Monomer. Associates with 30S ribosomal subunit, binds 16S rRNA. Requires Zn(2+) as cofactor.

It is found in the cytoplasm. Its function is as follows. One of several proteins that assist in the late maturation steps of the functional core of the 30S ribosomal subunit. Helps release RbfA from mature subunits. May play a role in the assembly of ribosomal proteins into the subunit. Circularly permuted GTPase that catalyzes slow GTP hydrolysis, GTPase activity is stimulated by the 30S ribosomal subunit. This chain is Small ribosomal subunit biogenesis GTPase RsgA, found in Clostridium beijerinckii (strain ATCC 51743 / NCIMB 8052) (Clostridium acetobutylicum).